Consider the following 395-residue polypeptide: Putative 8-amino-7-oxononanoate synthase (395 aa).

Residue arginine 22 coordinates substrate. 109–110 is a pyridoxal 5'-phosphate binding site; the sequence is GY. A substrate-binding site is contributed by histidine 139. Pyridoxal 5'-phosphate-binding positions include serine 187, 212 to 215, and 241 to 244; these read DEAH and TFSK. Lysine 244 is modified (N6-(pyridoxal phosphate)lysine). Threonine 358 provides a ligand contact to substrate.

It belongs to the class-II pyridoxal-phosphate-dependent aminotransferase family. BioF subfamily. Homodimer. The cofactor is pyridoxal 5'-phosphate.

It carries out the reaction 6-carboxyhexanoyl-[ACP] + L-alanine + H(+) = (8S)-8-amino-7-oxononanoate + holo-[ACP] + CO2. The protein operates within cofactor biosynthesis; biotin biosynthesis. Functionally, catalyzes the decarboxylative condensation of pimeloyl-[acyl-carrier protein] and L-alanine to produce 8-amino-7-oxononanoate (AON), [acyl-carrier protein], and carbon dioxide. This chain is Putative 8-amino-7-oxononanoate synthase (bioF), found in Magnetococcus marinus (strain ATCC BAA-1437 / JCM 17883 / MC-1).